A 484-amino-acid polypeptide reads, in one-letter code: MEQFNVWFTVSEVQGLVKSGGLADVAKALPQALKALHQQVAIALPAYRSVPGKEDAELVLETELTHWPHTQYRVLKRDLDGVPIYLIDCPAYFDRPALYAENNQAYADNGERFGFFSAACLDVLPKLGIQPDIIHANDWHTGLVPFLLKTRYRYDSFFEQVKSVLTVHNAIFKGIFSYHQLEVIPELNLSGMEFLQYGHDHVSMLRAGIAFADKVNAVSPNYAAELLTPLGAHGLVDDFVRRARDLHGIVNGCDYSEWNPRTDHYLPATYSDEPESMRKGKALCKTALQEELHLPVTDVPLFGMVCRLTHQKGFHYLLPILEQFLRNNVQVVIVGTGEPEVAARLNKIAHYHRAKFAFVETYSERLAHWVEAGSDFFLMPSEFEACGLNQIYSMAYGTLPIVREVGGLKDTVNDYDKFPERATGFGYQEPTPEALLITMQRALLFYLQQPEEMLKVQQRAMQQNFSWEESAQEYMKMYRLARFG.

Lys-18 provides a ligand contact to ADP-alpha-D-glucose.

This sequence belongs to the glycosyltransferase 1 family. Bacterial/plant glycogen synthase subfamily.

It carries out the reaction [(1-&gt;4)-alpha-D-glucosyl](n) + ADP-alpha-D-glucose = [(1-&gt;4)-alpha-D-glucosyl](n+1) + ADP + H(+). It participates in glycan biosynthesis; glycogen biosynthesis. In terms of biological role, synthesizes alpha-1,4-glucan chains using ADP-glucose. The polypeptide is Glycogen synthase (Vibrio cholerae serotype O1 (strain ATCC 39541 / Classical Ogawa 395 / O395)).